The following is a 526-amino-acid chain: GMP synthase [glutamine-hydrolyzing] (526 aa).

The Glutamine amidotransferase type-1 domain maps to 9–207 (RILILNFGSQ…VLDICSCQGR (199 aa)). The active-site Nucleophile is the Cys-86. Active-site residues include His-181 and Glu-183. Positions 208–401 (WTPNNIKENI…LGLPFHMLYR (194 aa)) constitute a GMPS ATP-PPase domain. 235 to 241 (SGGVDST) provides a ligand contact to ATP.

Homodimer.

The enzyme catalyses XMP + L-glutamine + ATP + H2O = GMP + L-glutamate + AMP + diphosphate + 2 H(+). It functions in the pathway purine metabolism; GMP biosynthesis; GMP from XMP (L-Gln route): step 1/1. Its function is as follows. Catalyzes the synthesis of GMP from XMP. This Baumannia cicadellinicola subsp. Homalodisca coagulata protein is GMP synthase [glutamine-hydrolyzing].